The primary structure comprises 716 residues: Zinc finger CCCH domain-containing protein 30 (716 aa).

ANK repeat units lie at residues 90 to 120 and 125 to 157; these read DYRTPLMVAATYGSIDVIKLIVSLTDADVNR and DQTTALHCAASGGAVNAIQVVKLLLAAGADLNL. Residues 201 to 231 are disordered; that stretch reads VTNVPNRSSSPCHSPTGENGGSGSGSPLGSP. A compositionally biased stretch (polar residues) spans 203–213; that stretch reads NVPNRSSSPCH. 2 consecutive C3H1-type zinc fingers follow at residues 306–328 and 336–360; these read PCPDFRKGACRRGDMCEYAHGVF and QYRTRLCKDGTGCARRVCFFAHTPE. Positions 521–562 are disordered; sequence FQQQQQQQQSMLSPINTSFSSPKSVDHSLFSGGGRMSPRNVV. Positions 530–543 are enriched in polar residues; sequence SMLSPINTSFSSPK. At S566 the chain carries Phosphoserine. A compositionally biased stretch (low complexity) spans 583–594; that stretch reads QQQQQQQQQQHQ. Disordered stretches follow at residues 583–638 and 667–692; these read QQQQ…MSSE and PAEAKEKAATSSSGEHVMKQPNPVEP. The segment covering 605–630 has biased composition (polar residues); it reads TNSSPIVGSPVNNNTWSSKWGSSNGQ.

This Arabidopsis thaliana (Mouse-ear cress) protein is Zinc finger CCCH domain-containing protein 30.